A 213-amino-acid chain; its full sequence is StAR-related lipid transfer protein 5 (213 aa).

Residues 1-213 (MDPALAAQMS…LQKAVKQFHE (213 aa)) enclose the START domain.

May be involved in the intracellular transport of sterols or other lipids. May bind cholesterol or other sterols. This Pongo abelii (Sumatran orangutan) protein is StAR-related lipid transfer protein 5 (STARD5).